The primary structure comprises 306 residues: Pantothenate kinase (306 aa).

91–98 (GSVAVGKS) contacts ATP.

The protein belongs to the prokaryotic pantothenate kinase family.

The protein localises to the cytoplasm. It catalyses the reaction (R)-pantothenate + ATP = (R)-4'-phosphopantothenate + ADP + H(+). It participates in cofactor biosynthesis; coenzyme A biosynthesis; CoA from (R)-pantothenate: step 1/5. The sequence is that of Pantothenate kinase from Streptococcus pneumoniae serotype 2 (strain D39 / NCTC 7466).